The sequence spans 156 residues: SsrA-binding protein (156 aa).

Positions 134 to 156 are disordered; sequence RQTLREQQDKRESLRELRERNRR.

The protein belongs to the SmpB family.

The protein localises to the cytoplasm. Required for rescue of stalled ribosomes mediated by trans-translation. Binds to transfer-messenger RNA (tmRNA), required for stable association of tmRNA with ribosomes. tmRNA and SmpB together mimic tRNA shape, replacing the anticodon stem-loop with SmpB. tmRNA is encoded by the ssrA gene; the 2 termini fold to resemble tRNA(Ala) and it encodes a 'tag peptide', a short internal open reading frame. During trans-translation Ala-aminoacylated tmRNA acts like a tRNA, entering the A-site of stalled ribosomes, displacing the stalled mRNA. The ribosome then switches to translate the ORF on the tmRNA; the nascent peptide is terminated with the 'tag peptide' encoded by the tmRNA and targeted for degradation. The ribosome is freed to recommence translation, which seems to be the essential function of trans-translation. In Paenarthrobacter aurescens (strain TC1), this protein is SsrA-binding protein.